The sequence spans 370 residues: D-aspartate oxidase (370 aa).

Residues Ile-15, Ala-49, Ser-50, Gly-54, Val-166, Arg-317, Gly-346, and Gln-348 each contribute to the FAD site. Positions 368–370 (ARL) match the Microbody targeting signal motif.

This sequence belongs to the DAMOX/DASOX family. As to quaternary structure, homotetramer. The cofactor is FAD.

The protein resides in the peroxisome matrix. It carries out the reaction D-aspartate + O2 + H2O = oxaloacetate + H2O2 + NH4(+). The enzyme catalyses D-glutamate + O2 + H2O = H2O2 + 2-oxoglutarate + NH4(+). With respect to regulation, inhibited by malonate and D-malate. Very mildly inhibited by benzoate, ethylenediaminetetraacetic acid (EDTA), crotonate and anthranilate. May be very mildly inhibited by meso-tartrate. Selectively catalyzes the oxidative deamination of acidic amino acids. Protects the organism from the toxicity of D-amino acids. Enables the organism to utilize D-amino acids as a source of nutrients. Enables the organism to utilize D-aspartate as a source of nitrogen and carbon. The protein is D-aspartate oxidase of Vanrija humicola (Yeast).